The sequence spans 774 residues: Lon protease 2 (774 aa).

A Lon N-terminal domain is found at 5–198 (YPLMPLRDIV…LLLEILFREL (194 aa)). 350–357 (GPPGVGKT) lines the ATP pocket. Positions 588-769 (RDEVGLATGL…DQVLEQALLS (182 aa)) constitute a Lon proteolytic domain. Active-site residues include S675 and K718.

It belongs to the peptidase S16 family. Homohexamer. Organized in a ring with a central cavity.

The protein localises to the cytoplasm. It catalyses the reaction Hydrolysis of proteins in presence of ATP.. Functionally, ATP-dependent serine protease that mediates the selective degradation of mutant and abnormal proteins as well as certain short-lived regulatory proteins. Required for cellular homeostasis and for survival from DNA damage and developmental changes induced by stress. Degrades polypeptides processively to yield small peptide fragments that are 5 to 10 amino acids long. Binds to DNA in a double-stranded, site-specific manner. The chain is Lon protease 2 from Desulfotalea psychrophila (strain LSv54 / DSM 12343).